Here is a 234-residue protein sequence, read N- to C-terminus: Orotidine 5'-phosphate decarboxylase (234 aa).

Residues Asp11, Lys33, 60–69 (DLKFHDIPNT), Thr120, Arg181, Gln190, Gly210, and Arg211 each bind substrate. The active-site Proton donor is Lys62.

This sequence belongs to the OMP decarboxylase family. Type 1 subfamily. Homodimer.

The enzyme catalyses orotidine 5'-phosphate + H(+) = UMP + CO2. It participates in pyrimidine metabolism; UMP biosynthesis via de novo pathway; UMP from orotate: step 2/2. In terms of biological role, catalyzes the decarboxylation of orotidine 5'-monophosphate (OMP) to uridine 5'-monophosphate (UMP). This is Orotidine 5'-phosphate decarboxylase from Aliivibrio salmonicida (strain LFI1238) (Vibrio salmonicida (strain LFI1238)).